A 367-amino-acid chain; its full sequence is Phosphoribosylaminoimidazole-succinocarboxamide synthase (367 aa).

Belongs to the SAICAR synthetase family.

The enzyme catalyses 5-amino-1-(5-phospho-D-ribosyl)imidazole-4-carboxylate + L-aspartate + ATP = (2S)-2-[5-amino-1-(5-phospho-beta-D-ribosyl)imidazole-4-carboxamido]succinate + ADP + phosphate + 2 H(+). It functions in the pathway purine metabolism; IMP biosynthesis via de novo pathway; 5-amino-1-(5-phospho-D-ribosyl)imidazole-4-carboxamide from 5-amino-1-(5-phospho-D-ribosyl)imidazole-4-carboxylate: step 1/2. The polypeptide is Phosphoribosylaminoimidazole-succinocarboxamide synthase (Aeromonas salmonicida (strain A449)).